A 146-amino-acid polypeptide reads, in one-letter code: Transcriptional regulator MraZ (146 aa).

SpoVT-AbrB domains lie at 5-48 (TSYH…TLEE) and 77-120 (ASEC…SRAK).

The protein belongs to the MraZ family. Forms oligomers.

The protein localises to the cytoplasm. Its subcellular location is the nucleoid. The sequence is that of Transcriptional regulator MraZ from Desulfosudis oleivorans (strain DSM 6200 / JCM 39069 / Hxd3) (Desulfococcus oleovorans).